Here is a 125-residue protein sequence, read N- to C-terminus: uncharacterized protein (125 aa).

A run of 4 helical transmembrane segments spans residues 9–29, 33–53, 56–76, and 100–120; these read IANA…TLTG, GEKT…NMVV, IVQV…TLVV, and FWTA…LNAF.

The protein resides in the cell membrane. This is an uncharacterized protein from Streptomyces coelicolor (strain ATCC BAA-471 / A3(2) / M145).